A 180-amino-acid polypeptide reads, in one-letter code: Dual-action ribosomal maturation protein DarP (180 aa).

Basic and acidic residues predominate over residues 1–13 (MKPDKTENTEHGI). The interval 1–21 (MKPDKTENTEHGIEPVSKTKR) is disordered.

It belongs to the DarP family.

It is found in the cytoplasm. Its function is as follows. Member of a network of 50S ribosomal subunit biogenesis factors which assembles along the 30S-50S interface, preventing incorrect 23S rRNA structures from forming. Promotes peptidyl transferase center (PTC) maturation. The protein is Dual-action ribosomal maturation protein DarP of Methylobacillus flagellatus (strain ATCC 51484 / DSM 6875 / VKM B-1610 / KT).